Reading from the N-terminus, the 223-residue chain is MTVDDDIEWRVTPGLSPYAETVAEMEARAAAIRAGEARELIWLLEHPPLYTAGTSAEADELLLPDRFPVFRSGRGGRYTYHGPGQRVGYVLLDLDRRGRDVRCFVAAIENWVIATLGDFGIAGRSEPGRVGIWTGHGPDEAKIGAIGVRVRRWVSFHGFSLNVDPDLSHFSGIVPCGLGEFAVTSMARLGIPAEMAAVDAALRRHFPAMLAGLRCSTRSDKDS.

One can recognise a BPL/LPL catalytic domain in the interval 35 to 214 (GEARELIWLL…HFPAMLAGLR (180 aa)). Substrate contacts are provided by residues 74–81 (RGGRYTYH), 145–147 (AIG), and 158–160 (GFS). C176 (acyl-thioester intermediate) is an active-site residue.

Belongs to the LipB family.

Its subcellular location is the cytoplasm. It carries out the reaction octanoyl-[ACP] + L-lysyl-[protein] = N(6)-octanoyl-L-lysyl-[protein] + holo-[ACP] + H(+). The protein operates within protein modification; protein lipoylation via endogenous pathway; protein N(6)-(lipoyl)lysine from octanoyl-[acyl-carrier-protein]: step 1/2. In terms of biological role, catalyzes the transfer of endogenously produced octanoic acid from octanoyl-acyl-carrier-protein onto the lipoyl domains of lipoate-dependent enzymes. Lipoyl-ACP can also act as a substrate although octanoyl-ACP is likely to be the physiological substrate. In Rhizorhabdus wittichii (strain DSM 6014 / CCUG 31198 / JCM 15750 / NBRC 105917 / EY 4224 / RW1) (Sphingomonas wittichii), this protein is Octanoyltransferase.